The sequence spans 134 residues: Crustacean hyperglycemic hormones isoform A (134 aa).

The first 24 residues, 1-24 (MMACRTLCLVVVMVASLGTSGVGG), serve as a signal peptide directing secretion. A Pyrrolidone carboxylic acid modification is found at glutamine 61. A D-phenylalanine; in form CHH-A-II modification is found at phenylalanine 63. 3 cysteine pairs are disulfide-bonded: cysteine 67–cysteine 103, cysteine 83–cysteine 99, and cysteine 86–cysteine 112. A Valine amide modification is found at valine 132.

It belongs to the arthropod CHH/MIH/GIH/VIH hormone family. Post-translationally, stereoinversion of L-Phe (form CHH-A-I) to D-Phe (form CHH-A-II). Produced by the medulla terminalis X-organ in the eyestalks and transported to the sinus gland where they are stored and released. Present also in the ventral nervous system.

The protein localises to the secreted. Its function is as follows. CHH is the most abundant hormone in the sinus gland of isopods and decapods which controls the blood sugar level. Has a secretagogue action over the amylase released from the midgut gland. May act as a stress hormone. MIH may inhibit Y-organs where molting hormone (ecdysteroid) is secreted and a molting cycle is initiated when MIH secretion diminishes or stops. This chain is Crustacean hyperglycemic hormones isoform A, found in Homarus americanus (American lobster).